Reading from the N-terminus, the 468-residue chain is 3-isopropylmalate dehydratase large subunit (468 aa).

[4Fe-4S] cluster contacts are provided by cysteine 347, cysteine 407, and cysteine 410.

Belongs to the aconitase/IPM isomerase family. LeuC type 1 subfamily. As to quaternary structure, heterodimer of LeuC and LeuD. [4Fe-4S] cluster is required as a cofactor.

The enzyme catalyses (2R,3S)-3-isopropylmalate = (2S)-2-isopropylmalate. It functions in the pathway amino-acid biosynthesis; L-leucine biosynthesis; L-leucine from 3-methyl-2-oxobutanoate: step 2/4. Functionally, catalyzes the isomerization between 2-isopropylmalate and 3-isopropylmalate, via the formation of 2-isopropylmaleate. This chain is 3-isopropylmalate dehydratase large subunit, found in Prochlorococcus marinus (strain AS9601).